The sequence spans 497 residues: Cytochrome P450 98A8 (497 aa).

The helical transmembrane segment at 2 to 19 threads the bilayer; the sequence is IIYLISLLPIIVATLMLY. C431 provides a ligand contact to heme.

It belongs to the cytochrome P450 family. Requires heme as cofactor. Strongly expressed in inflorescence tips, young flower buds, seeds, stamen, tapetum and pollen.

Its subcellular location is the membrane. In terms of biological role, acts redundantly with CYP98A9 as tricoumaroylspermidine meta-hydroxylase. Also catalyzes the meta-hydroxylation of the three triferuloylspermidine phenolic rings. Unable to use 5-O-(4-coumaroyl) D-quinate or 5-O-(4-coumaroyl) shikimate as substrates. This Arabidopsis thaliana (Mouse-ear cress) protein is Cytochrome P450 98A8 (CYP98A8).